We begin with the raw amino-acid sequence, 141 residues long: Nucleoside diphosphate kinase (141 aa).

ATP-binding residues include lysine 11, phenylalanine 59, arginine 87, threonine 93, arginine 104, and asparagine 114. Histidine 117 acts as the Pros-phosphohistidine intermediate in catalysis.

It belongs to the NDK family. Homotetramer. It depends on Mg(2+) as a cofactor.

The protein resides in the cytoplasm. The catalysed reaction is a 2'-deoxyribonucleoside 5'-diphosphate + ATP = a 2'-deoxyribonucleoside 5'-triphosphate + ADP. It carries out the reaction a ribonucleoside 5'-diphosphate + ATP = a ribonucleoside 5'-triphosphate + ADP. Functionally, major role in the synthesis of nucleoside triphosphates other than ATP. The ATP gamma phosphate is transferred to the NDP beta phosphate via a ping-pong mechanism, using a phosphorylated active-site intermediate. The chain is Nucleoside diphosphate kinase from Nitrosomonas europaea (strain ATCC 19718 / CIP 103999 / KCTC 2705 / NBRC 14298).